The chain runs to 301 residues: Ribosomal RNA small subunit methyltransferase A (301 aa).

S-adenosyl-L-methionine is bound by residues N29, L31, G56, E77, D102, and N127.

This sequence belongs to the class I-like SAM-binding methyltransferase superfamily. rRNA adenine N(6)-methyltransferase family. RsmA subfamily.

Its subcellular location is the cytoplasm. The enzyme catalyses adenosine(1518)/adenosine(1519) in 16S rRNA + 4 S-adenosyl-L-methionine = N(6)-dimethyladenosine(1518)/N(6)-dimethyladenosine(1519) in 16S rRNA + 4 S-adenosyl-L-homocysteine + 4 H(+). Functionally, specifically dimethylates two adjacent adenosines (A1518 and A1519) in the loop of a conserved hairpin near the 3'-end of 16S rRNA in the 30S particle. May play a critical role in biogenesis of 30S subunits. In Halothermothrix orenii (strain H 168 / OCM 544 / DSM 9562), this protein is Ribosomal RNA small subunit methyltransferase A.